The primary structure comprises 353 residues: Paraneoplastic antigen Ma1 homolog (353 aa).

This sequence belongs to the PNMA family.

Its subcellular location is the nucleus. The protein localises to the nucleolus. In Bos taurus (Bovine), this protein is Paraneoplastic antigen Ma1 homolog (PNMA1).